Reading from the N-terminus, the 372-residue chain is MALRFEILHQSKKSRARVGRIETEHGCIDTPAFVPVATNGALKGVLDHSNIPLMFCNTYHLIVHPGAEAVAAMGGLHQFIGRNAPIITDSGGFQIFSLAYGSVAEEIKSCGKKKGENSIIKINDEGVWFKSYRDGRKLFLSPEVSVQAQKHLGADIIIPLDELLPFHTDPAYFQQSSQRTYAWEKRSLDYHLANPGYQSMYGVIHGGTFPDQRKLGCQFVEDLPFDGSAIGGSLGKNLRDIVGVVDVTTANLSIERPRHLLGIGDLPSIWATVGFGIDSFDSSYPTKAARHGMILTSQGSLKINNQRYASDLNPIEPGCACPACSQGISRAYLRHLFKVHEPNAGIWASIHNMHYMQKIMSKIREKILNDQL.

The Proton acceptor role is filled by aspartate 89. Substrate is bound by residues 89–93 (DSGGF), aspartate 161, and glycine 232. The segment at 262–268 (GIGDLPS) is RNA binding. Residue aspartate 281 is the Nucleophile of the active site. Residues 286–290 (TKAAR) form an RNA binding; important for wobble base 34 recognition region. 4 residues coordinate Zn(2+): cysteine 319, cysteine 321, cysteine 324, and histidine 351.

The protein belongs to the queuine tRNA-ribosyltransferase family. Homodimer. Within each dimer, one monomer is responsible for RNA recognition and catalysis, while the other monomer binds to the replacement base PreQ1. The cofactor is Zn(2+).

It carries out the reaction 7-aminomethyl-7-carbaguanine + guanosine(34) in tRNA = 7-aminomethyl-7-carbaguanosine(34) in tRNA + guanine. It participates in tRNA modification; tRNA-queuosine biosynthesis. Catalyzes the base-exchange of a guanine (G) residue with the queuine precursor 7-aminomethyl-7-deazaguanine (PreQ1) at position 34 (anticodon wobble position) in tRNAs with GU(N) anticodons (tRNA-Asp, -Asn, -His and -Tyr). Catalysis occurs through a double-displacement mechanism. The nucleophile active site attacks the C1' of nucleotide 34 to detach the guanine base from the RNA, forming a covalent enzyme-RNA intermediate. The proton acceptor active site deprotonates the incoming PreQ1, allowing a nucleophilic attack on the C1' of the ribose to form the product. After dissociation, two additional enzymatic reactions on the tRNA convert PreQ1 to queuine (Q), resulting in the hypermodified nucleoside queuosine (7-(((4,5-cis-dihydroxy-2-cyclopenten-1-yl)amino)methyl)-7-deazaguanosine). The chain is Queuine tRNA-ribosyltransferase from Chlamydia muridarum (strain MoPn / Nigg).